Consider the following 262-residue polypeptide: DNA-directed RNA polymerase subunit Rpo3 (262 aa).

It belongs to the archaeal Rpo3/eukaryotic RPB3 RNA polymerase subunit family. Part of the RNA polymerase complex.

The protein resides in the cytoplasm. It catalyses the reaction RNA(n) + a ribonucleoside 5'-triphosphate = RNA(n+1) + diphosphate. Its function is as follows. DNA-dependent RNA polymerase (RNAP) catalyzes the transcription of DNA into RNA using the four ribonucleoside triphosphates as substrates. This Pyrobaculum neutrophilum (strain DSM 2338 / JCM 9278 / NBRC 100436 / V24Sta) (Thermoproteus neutrophilus) protein is DNA-directed RNA polymerase subunit Rpo3.